The primary structure comprises 359 residues: Ornithine carbamoyltransferase, mitochondrial (359 aa).

Residues methionine 1–threonine 24 constitute a mitochondrion transit peptide. Carbamoyl phosphate is bound by residues serine 87 to threonine 90, arginine 138, histidine 165, and glutamine 168. 4 residues coordinate L-ornithine: asparagine 205, aspartate 271, serine 275, and methionine 276. Catalysis depends on cysteine 313, which acts as the Proton acceptor. Residues cysteine 313–leucine 314 and arginine 340 contribute to the carbamoyl phosphate site.

Belongs to the aspartate/ornithine carbamoyltransferase superfamily. OTCase family. In terms of assembly, homotrimer.

It is found in the mitochondrion matrix. It catalyses the reaction carbamoyl phosphate + L-ornithine = L-citrulline + phosphate + H(+). Its pathway is amino-acid biosynthesis; L-arginine biosynthesis; L-arginine from L-ornithine and carbamoyl phosphate: step 1/3. This chain is Ornithine carbamoyltransferase, mitochondrial (argB), found in Emericella nidulans (strain FGSC A4 / ATCC 38163 / CBS 112.46 / NRRL 194 / M139) (Aspergillus nidulans).